Consider the following 214-residue polypeptide: Thiamine-phosphate synthase (214 aa).

Residues 37–41 and Asn-73 each bind 4-amino-2-methyl-5-(diphosphooxymethyl)pyrimidine; that span reads QYREK. Mg(2+) contacts are provided by Asp-74 and Asp-93. Residue Ser-112 coordinates 4-amino-2-methyl-5-(diphosphooxymethyl)pyrimidine. 2-[(2R,5Z)-2-carboxy-4-methylthiazol-5(2H)-ylidene]ethyl phosphate is bound at residue 139 to 141; sequence TIS. Lys-142 contributes to the 4-amino-2-methyl-5-(diphosphooxymethyl)pyrimidine binding site. 2-[(2R,5Z)-2-carboxy-4-methylthiazol-5(2H)-ylidene]ethyl phosphate is bound by residues Gly-171 and 191–192; that span reads IS.

This sequence belongs to the thiamine-phosphate synthase family. Mg(2+) is required as a cofactor.

It catalyses the reaction 2-[(2R,5Z)-2-carboxy-4-methylthiazol-5(2H)-ylidene]ethyl phosphate + 4-amino-2-methyl-5-(diphosphooxymethyl)pyrimidine + 2 H(+) = thiamine phosphate + CO2 + diphosphate. It carries out the reaction 2-(2-carboxy-4-methylthiazol-5-yl)ethyl phosphate + 4-amino-2-methyl-5-(diphosphooxymethyl)pyrimidine + 2 H(+) = thiamine phosphate + CO2 + diphosphate. The enzyme catalyses 4-methyl-5-(2-phosphooxyethyl)-thiazole + 4-amino-2-methyl-5-(diphosphooxymethyl)pyrimidine + H(+) = thiamine phosphate + diphosphate. It participates in cofactor biosynthesis; thiamine diphosphate biosynthesis; thiamine phosphate from 4-amino-2-methyl-5-diphosphomethylpyrimidine and 4-methyl-5-(2-phosphoethyl)-thiazole: step 1/1. Condenses 4-methyl-5-(beta-hydroxyethyl)thiazole monophosphate (THZ-P) and 2-methyl-4-amino-5-hydroxymethyl pyrimidine pyrophosphate (HMP-PP) to form thiamine monophosphate (TMP). In Listeria innocua serovar 6a (strain ATCC BAA-680 / CLIP 11262), this protein is Thiamine-phosphate synthase.